We begin with the raw amino-acid sequence, 489 residues long: Cytochrome P450 2C70 (489 aa).

Positions 1-27 are cleaved as a signal peptide; sequence MALFIFLGIWLSCLVFLFLWNQHHVRR. Cysteine 434 serves as a coordination point for heme.

The protein belongs to the cytochrome P450 family. It depends on heme as a cofactor.

It is found in the endoplasmic reticulum membrane. The protein localises to the microsome membrane. It catalyses the reaction chenodeoxycholate + reduced [NADPH--hemoprotein reductase] + O2 = alpha-muricholate + oxidized [NADPH--hemoprotein reductase] + H2O + H(+). The catalysed reaction is ursodeoxycholate + reduced [NADPH--hemoprotein reductase] + O2 = beta-muricholate + oxidized [NADPH--hemoprotein reductase] + H2O + H(+). Functionally, a cytochrome P450 monooxygenase involved in muricholic acid (MCA) synthesis. Hydroxylates at the 6-beta position two major bile acids, chenodeoxycholic acid (CDCA) and ursodeoxycholic acid (UDCA) to form alpha-MCA and beta-MCA, respectively. May regulate NR1H4/farnesoid X receptor signaling, as taurine-conjugated MCAs are antagonists of NR1H4. Mechanistically, uses molecular oxygen inserting one oxygen atom into a substrate, and reducing the second into a water molecule, with two electrons provided by NADPH via cytochrome P450 reductase (CPR; NADPH-ferrihemoprotein reductase). The polypeptide is Cytochrome P450 2C70 (Rattus norvegicus (Rat)).